The primary structure comprises 321 residues: Phosphatidate cytidylyltransferase, mitochondrial (321 aa).

It belongs to the TAM41 family. Requires Mg(2+) as cofactor. The cofactor is Co(2+). Cu(2+) is required as a cofactor.

The protein resides in the mitochondrion inner membrane. It carries out the reaction a 1,2-diacyl-sn-glycero-3-phosphate + CTP + H(+) = a CDP-1,2-diacyl-sn-glycerol + diphosphate. The protein operates within phospholipid metabolism; CDP-diacylglycerol biosynthesis; CDP-diacylglycerol from sn-glycerol 3-phosphate: step 3/3. In terms of biological role, catalyzes the formation of CDP-diacylglycerol (CDP-DAG) from phosphatidic acid (PA) in the mitochondrial inner membrane. Required for the biosynthesis of the dimeric phospholipid cardiolipin, which stabilizes supercomplexes of the mitochondrial respiratory chain in the mitochondrial inner membrane. The polypeptide is Phosphatidate cytidylyltransferase, mitochondrial (Caenorhabditis briggsae).